Reading from the N-terminus, the 286-residue chain is NH(3)-dependent NAD(+) synthetase (286 aa).

Residue 51–58 (GISGGVDS) participates in ATP binding. Position 57 (D57) interacts with Mg(2+). Deamido-NAD(+) is bound at residue R148. T168 provides a ligand contact to ATP. E173 is a binding site for Mg(2+). 2 residues coordinate deamido-NAD(+): K181 and D188. ATP contacts are provided by K197 and T219. Residue 268–269 (HK) coordinates deamido-NAD(+).

The protein belongs to the NAD synthetase family. As to quaternary structure, homodimer.

The enzyme catalyses deamido-NAD(+) + NH4(+) + ATP = AMP + diphosphate + NAD(+) + H(+). It participates in cofactor biosynthesis; NAD(+) biosynthesis; NAD(+) from deamido-NAD(+) (ammonia route): step 1/1. Functionally, catalyzes the ATP-dependent amidation of deamido-NAD to form NAD. Uses ammonia as a nitrogen source. The chain is NH(3)-dependent NAD(+) synthetase from Paraburkholderia phytofirmans (strain DSM 17436 / LMG 22146 / PsJN) (Burkholderia phytofirmans).